The sequence spans 309 residues: Olfactory receptor 1A1 (309 aa).

At 1 to 25 the chain is on the extracellular side; that stretch reads MRENNQSSTLEFILLGVTGQQEQED. Residue N5 is glycosylated (N-linked (GlcNAc...) asparagine). The chain crosses the membrane as a helical span at residues 26–49; it reads FFYILFLFIYPITLIGNLLIVLAI. The Cytoplasmic portion of the chain corresponds to 50–57; sequence CSDVHLHN. The chain crosses the membrane as a helical span at residues 58 to 79; it reads PMYFLLANLSLVDIFFSSVTIP. The Extracellular portion of the chain corresponds to 80-100; it reads KMLANHLSGSKSISFGGCLTQ. A disulfide bridge connects residues C97 and C189. The helical transmembrane segment at 101–120 threads the bilayer; that stretch reads MYFMIDLGNTDSYTLAAMAY. Residues 121–139 are Cytoplasmic-facing; it reads DRAVAISRPLHYTTIMSPR. A helical membrane pass occupies residues 140-158; the sequence is SCIWLIAGSWVIGNANALP. The Extracellular portion of the chain corresponds to 159-195; sequence HTLLTASLSFCGNQEVANFYCDITPLLKLSCSDIHFH. The chain crosses the membrane as a helical span at residues 196–218; the sequence is VKMMYLGVGIFSVPLLCIIVSYI. The Cytoplasmic segment spans residues 219 to 235; it reads RVFSTVFQVPSTKGVLK. A helical membrane pass occupies residues 236 to 258; the sequence is AFSTCGSHLTVVSLYYGTVMGMY. Residues 259-270 lie on the Extracellular side of the membrane; it reads FRPLTNYSLKDA. N-linked (GlcNAc...) asparagine glycosylation is present at N264. The helical transmembrane segment at 271-290 threads the bilayer; the sequence is VITVMCTAVTPMLNPFIYSL. Over 291 to 309 the chain is Cytoplasmic; that stretch reads RNRDMKAALQKLFNKRISS.

The protein belongs to the G-protein coupled receptor 1 family.

The protein localises to the cell membrane. Functionally, odorant receptor. In Gorilla gorilla gorilla (Western lowland gorilla), this protein is Olfactory receptor 1A1 (OR1A1).